The primary structure comprises 508 residues: DASH complex subunit ASK1 (508 aa).

Disordered stretches follow at residues 86–138 (LVDG…TLSS) and 150–355 (SRAA…QLRS). Residues 116–138 (EPSQYTPRPQTSAGGHDTTTLSS) show a composition bias toward polar residues. A compositionally biased stretch (basic and acidic residues) spans 161–175 (QHHDDSSVLTDRDGD). Residues 201-213 (DEMDIDMDEEDSE) are compositionally biased toward acidic residues. Positions 229 to 238 (RYYDDDHGFE) are enriched in basic and acidic residues. Positions 239-258 (QGEEEEDEEEEEEEEEEEEG) are enriched in acidic residues. Basic and acidic residues predominate over residues 326–338 (IKQEDTEKKRPLW).

Belongs to the DASH complex ASK1 family. As to quaternary structure, component of the DASH complex consisting of ASK1, DAD1, DAD2, DAD3, DAD4, DAM1, DUO1, HSK3, SPC19 and SPC34, with a stoichiometry of one copy of each subunit per complex. Multiple DASH complexes oligomerize to form a ring that encircles spindle microtubules and organizes the rod-like NDC80 complexes of the outer kinetochore. On cytoplasmic microtubules, DASH complexes appear to form patches instead of rings.

The protein localises to the chromosome. Its subcellular location is the centromere. The protein resides in the kinetochore. It is found in the cytoplasm. It localises to the cytoskeleton. The protein localises to the spindle. Its subcellular location is the nucleus. Component of the DASH complex that connects microtubules with kinetochores and couples microtubule depolymerisation to chromosome movement; it is involved in retrieving kinetochores to the spindle poles before their re-orientation on the spindle in early mitosis and allows microtubule depolymerization to pull chromosomes apart and resist detachment during anaphase. Kinetochores, consisting of a centromere-associated inner segment and a microtubule-contacting outer segment, play a crucial role in chromosome segregation by mediating the physical connection between centromeric DNA and microtubules. Kinetochores also serve as an input point for the spindle assembly checkpoint, which delays anaphase until all chromosomes have bioriented on the mitotic spindle. This is DASH complex subunit ASK1 from Chaetomium thermophilum (strain DSM 1495 / CBS 144.50 / IMI 039719) (Thermochaetoides thermophila).